The chain runs to 555 residues: Beta-fructofuranosidase, cell wall isozyme (555 aa).

An N-terminal signal peptide occupies residues 1–22 (MAISSIFLLSLFSLIYVIPIEA). Substrate-binding positions include 58-61 (WIND), Q77, W85, and 120-121 (WS). Residue D61 is part of the active site. Residue D140 is part of the active site. N154 and N181 each carry an N-linked (GlcNAc...) asparagine glycan. Substrate is bound by residues 186–187 (RD), E241, and D277. N-linked (GlcNAc...) asparagine glycosylation occurs at N337. Cysteines 435 and 481 form a disulfide.

This sequence belongs to the glycosyl hydrolase 32 family.

The catalysed reaction is Hydrolysis of terminal non-reducing beta-D-fructofuranoside residues in beta-D-fructofuranosides.. The sequence is that of Beta-fructofuranosidase, cell wall isozyme (BFRUCT1) from Pisum sativum (Garden pea).